A 57-amino-acid chain; its full sequence is Large ribosomal subunit protein uL30 (57 aa).

This sequence belongs to the universal ribosomal protein uL30 family. As to quaternary structure, part of the 50S ribosomal subunit.

The sequence is that of Large ribosomal subunit protein uL30 from Acholeplasma laidlawii (strain PG-8A).